The primary structure comprises 279 residues: Replication protein A 32 kDa subunit A (279 aa).

A disordered region spans residues 1 to 39 (MMSFSQPDAFSPSQFTSSQNAAADSTTPSKSRGASSTMP). Residues 71–145 (VRLVGLVSGK…RATAFAIRPV (75 aa)) constitute a DNA-binding region (OB). The segment at 181-210 (GSSSSNGFSEMTTPTSVKSNPAPVLSVTNG) is disordered. Polar residues predominate over residues 190-199 (EMTTPTSVKS).

This sequence belongs to the replication factor A protein 2 family. Heterotrimer of RPA1, RPA2 and RPA3 (canonical replication protein A complex). Interacts with RPA1A, RPA1B and RPA3. Post-translationally, phosphorylated in a cell-cycle-dependent manner (from the S phase until mitosis). In response to DNA damage, recruited to DNA-repair nuclear foci, as a hypophosphorylated form. Expressed in root tips, roots, shoot apical meristem (SAM), young leaves, flag leaves and ears, and at lower levels in mature leaves.

It is found in the nucleus. In terms of biological role, component of the replication protein A complex (RPA) required for DNA recombination, repair and replication. The activity of RPA is mediated by single-stranded DNA binding and protein interactions. The chain is Replication protein A 32 kDa subunit A (RPA2A) from Oryza sativa subsp. japonica (Rice).